The primary structure comprises 401 residues: MFHLDTLATLVAATLTLLLGRKLVHSVSFLKKYTIPEPVAGGLLVALALLVLKKSMGWEVNFDMSLRDPLMLAFFATIGLNANIASLRAGGRVVGIFLIVVVGLLVMQNAIGIGMASLLGLDPLMGLLAGSITLSGGHGTGAAWSKLFIERYGFTNATEVAMACATFGLVLGGLIGGPVARYLVKHSTTPNGIPDDQEVPTAFEKPDVGRMITSLVLIETIALIAICLTVGKIVAQLLAGTAFELPTFVCVLFVGVILSNGLSIMGFYRVFERAVSVLGNVSLSLFLAMALMGLKLWELASLALPMLAILVVQTIFMALYAIFVTWRMMGKNYDAAVLAAGHCGFGLGATPTAIANMQAITERFGPSHMAFLVVPMVGAFFIDIVNALVIKLYLMLPIFAG.

Topologically, residues 1 to 6 (MFHLDT) are periplasmic. The chain crosses the membrane as a helical span at residues 7–24 (LATLVAATLTLLLGRKLV). Over 25-32 (HSVSFLKK) the chain is Cytoplasmic. Residues 33–52 (YTIPEPVAGGLLVALALLVL) traverse the membrane as a helical segment. The Periplasmic segment spans residues 53-69 (KKSMGWEVNFDMSLRDP). The helical transmembrane segment at 70-87 (LMLAFFATIGLNANIASL) threads the bilayer. The Cytoplasmic portion of the chain corresponds to 88–93 (RAGGRV). A helical membrane pass occupies residues 94 to 116 (VGIFLIVVVGLLVMQNAIGIGMA). Topologically, residues 117-156 (SLLGLDPLMGLLAGSITLSGGHGTGAAWSKLFIERYGFTN) are periplasmic. Residues 157 to 179 (ATEVAMACATFGLVLGGLIGGPV) form a helical membrane-spanning segment. The Cytoplasmic segment spans residues 180–212 (ARYLVKHSTTPNGIPDDQEVPTAFEKPDVGRMI). The helical transmembrane segment at 213 to 235 (TSLVLIETIALIAICLTVGKIVA) threads the bilayer. At 236–244 (QLLAGTAFE) the chain is on the periplasmic side. A helical transmembrane segment spans residues 245–267 (LPTFVCVLFVGVILSNGLSIMGF). At 268 to 276 (YRVFERAVS) the chain is on the cytoplasmic side. A helical transmembrane segment spans residues 277–292 (VLGNVSLSLFLAMALM). Residues 293–301 (GLKLWELAS) are Periplasmic-facing. A helical transmembrane segment spans residues 302 to 324 (LALPMLAILVVQTIFMALYAIFV). Over 325–367 (TWRMMGKNYDAAVLAAGHCGFGLGATPTAIANMQAITERFGPS) the chain is Cytoplasmic. The helical transmembrane segment at 368-390 (HMAFLVVPMVGAFFIDIVNALVI) threads the bilayer. Topologically, residues 391–401 (KLYLMLPIFAG) are periplasmic.

The protein belongs to the glutamate:Na(+) symporter (ESS) (TC 2.A.27) family.

Its subcellular location is the cell inner membrane. With respect to regulation, inhibited by the uncoupler carbonylcyanide m-chlorophenylhydrazone (CCCP) and the ionophore monensin. Functionally, catalyzes the sodium-dependent, binding-protein-independent transport of glutamate. In Escherichia coli (strain K12), this protein is Sodium/glutamate symporter.